The primary structure comprises 81 residues: Large ribosomal subunit protein bL31B (81 aa).

This sequence belongs to the bacterial ribosomal protein bL31 family. Type B subfamily. As to quaternary structure, part of the 50S ribosomal subunit.

The polypeptide is Large ribosomal subunit protein bL31B (Lactococcus lactis subsp. lactis (strain IL1403) (Streptococcus lactis)).